The chain runs to 259 residues: Ribonuclease PH (259 aa).

Residues Arg88 and 126–128 contribute to the phosphate site; that span reads GTR.

The protein belongs to the RNase PH family. In terms of assembly, homohexameric ring arranged as a trimer of dimers.

It catalyses the reaction tRNA(n+1) + phosphate = tRNA(n) + a ribonucleoside 5'-diphosphate. Its function is as follows. Phosphorolytic 3'-5' exoribonuclease that plays an important role in tRNA 3'-end maturation. Removes nucleotide residues following the 3'-CCA terminus of tRNAs; can also add nucleotides to the ends of RNA molecules by using nucleoside diphosphates as substrates, but this may not be physiologically important. Probably plays a role in initiation of 16S rRNA degradation (leading to ribosome degradation) during starvation. The polypeptide is Ribonuclease PH (Mycobacterium bovis (strain BCG / Pasteur 1173P2)).